The following is a 352-amino-acid chain: tRNA N6-adenosine threonylcarbamoyltransferase (352 aa).

Fe cation-binding residues include His-115 and His-119. Substrate-binding positions include 138–142, Asp-171, Gly-184, and Asn-276; that span reads LVSGG. Asp-304 contacts Fe cation.

This sequence belongs to the KAE1 / TsaD family. Requires Fe(2+) as cofactor.

It is found in the cytoplasm. It carries out the reaction L-threonylcarbamoyladenylate + adenosine(37) in tRNA = N(6)-L-threonylcarbamoyladenosine(37) in tRNA + AMP + H(+). Functionally, required for the formation of a threonylcarbamoyl group on adenosine at position 37 (t(6)A37) in tRNAs that read codons beginning with adenine. Is involved in the transfer of the threonylcarbamoyl moiety of threonylcarbamoyl-AMP (TC-AMP) to the N6 group of A37, together with TsaE and TsaB. TsaD likely plays a direct catalytic role in this reaction. In Xanthomonas axonopodis pv. citri (strain 306), this protein is tRNA N6-adenosine threonylcarbamoyltransferase.